A 231-amino-acid polypeptide reads, in one-letter code: Orotidine 5'-phosphate decarboxylase (231 aa).

Substrate-binding positions include Asp-11, Lys-33, 60–69 (DLKFHDIPNT), Thr-120, Arg-181, Gln-190, Gly-210, and Arg-211. Catalysis depends on Lys-62, which acts as the Proton donor.

It belongs to the OMP decarboxylase family. Type 1 subfamily. In terms of assembly, homodimer.

It carries out the reaction orotidine 5'-phosphate + H(+) = UMP + CO2. It functions in the pathway pyrimidine metabolism; UMP biosynthesis via de novo pathway; UMP from orotate: step 2/2. Functionally, catalyzes the decarboxylation of orotidine 5'-monophosphate (OMP) to uridine 5'-monophosphate (UMP). The sequence is that of Orotidine 5'-phosphate decarboxylase from Pseudoalteromonas atlantica (strain T6c / ATCC BAA-1087).